A 593-amino-acid chain; its full sequence is MFFYSPNVASSSSASHRRGTLTHQHHLHVGHLDTRLSVQIPEILSRNFGHHDPERARLVPEHLRFLVDENQELWTGGNQPPVGILELCAASPVDSVFSTNDARRHSQRKLILRRPTISIQEDGKIIIDHVTARWEGANINSQSALLDADDGATVITDTIKDDQEDKEPKSCPQQTVKYIKILLPHVILVSVLIGYLCLGAWILMLLETRTELLSRSKKLVRLTNLMSNFTAESWRMLSDAQHGSITMDEGEWAATFREWMVRVSETVDDRRPIRRELNRPDDLSNMHNKWTFPTALLYVLTVLTTCGYGEVSVDTDVGKVFSVAFALVGIPLMFITAADIGKFLSETLLKFVSFWNRSVRKVKQWMSRVRHGRRKSLQSTGGQNDTLDILGVDGTEEKLWFPIGAYVSCICLYCSMGSAMFINWERTWSFIHAFHFGFNLIVTVGLGDIVVTDYIFLSLIVAFVIVGLSVVTMCVDLASTHLKAYFTRIHYFGRAKRFLGMSEELKEIVALLGAMRRKKGGKVTWNDVRDFLDNELRDRPFEPHELLMKLRFIDETSSGMSTIRHNSFQSDFFRESEYIRRVAALRPEQPAYL.

6 helical membrane-spanning segments follow: residues 186 to 206 (VILV…LMLL), 291 to 311 (TFPT…YGEV), 320 to 340 (VFSV…AADI), 402 to 422 (PIGA…AMFI), 430 to 450 (FIHA…GDIV), and 455 to 475 (IFLS…TMCV).

It belongs to the two pore domain potassium channel (TC 1.A.1.8) family.

It is found in the membrane. In terms of biological role, has a role in mobility, possibly in the transport of potassium in muscles. The polypeptide is Uncoordinated protein 58 (Caenorhabditis briggsae).